Here is a 203-residue protein sequence, read N- to C-terminus: Glycerol-3-phosphate acyltransferase (203 aa).

A run of 5 helical transmembrane segments spans residues 10-30, 59-79, 87-107, 116-136, and 168-188; these read LLAL…GLLI, PAAA…VILA, AAQI…YLKF, FFGT…AIWL, and LVVL…ENII.

Belongs to the PlsY family. Probably interacts with PlsX.

It localises to the cell inner membrane. It carries out the reaction an acyl phosphate + sn-glycerol 3-phosphate = a 1-acyl-sn-glycero-3-phosphate + phosphate. It participates in lipid metabolism; phospholipid metabolism. Catalyzes the transfer of an acyl group from acyl-phosphate (acyl-PO(4)) to glycerol-3-phosphate (G3P) to form lysophosphatidic acid (LPA). This enzyme utilizes acyl-phosphate as fatty acyl donor, but not acyl-CoA or acyl-ACP. The chain is Glycerol-3-phosphate acyltransferase from Dinoroseobacter shibae (strain DSM 16493 / NCIMB 14021 / DFL 12).